The chain runs to 213 residues: Triosephosphate isomerase (213 aa).

7–9 contacts substrate; that stretch reads NLK. The Electrophile role is filled by His-88. Catalysis depends on Glu-136, which acts as the Proton acceptor. Residues Ile-141 and Gly-174 each contribute to the substrate site.

This sequence belongs to the triosephosphate isomerase family. In terms of assembly, homotetramer; dimer of dimers.

The protein localises to the cytoplasm. It carries out the reaction D-glyceraldehyde 3-phosphate = dihydroxyacetone phosphate. The protein operates within carbohydrate biosynthesis; gluconeogenesis. It functions in the pathway carbohydrate degradation; glycolysis; D-glyceraldehyde 3-phosphate from glycerone phosphate: step 1/1. Its function is as follows. Involved in the gluconeogenesis. Catalyzes stereospecifically the conversion of dihydroxyacetone phosphate (DHAP) to D-glyceraldehyde-3-phosphate (G3P). This Thermoplasma volcanium (strain ATCC 51530 / DSM 4299 / JCM 9571 / NBRC 15438 / GSS1) protein is Triosephosphate isomerase.